A 446-amino-acid chain; its full sequence is tRNA wybutosine-synthesizing protein 2 homolog (446 aa).

S-adenosyl-L-methionine-binding positions include Ser208, Lys215, Glu255, and 283–284; that span reads DN.

Belongs to the class I-like SAM-binding methyltransferase superfamily. TRM5/TYW2 family.

It catalyses the reaction 4-demethylwyosine(37) in tRNA(Phe) + S-adenosyl-L-methionine = 4-demethyl-7-[(3S)-3-amino-3-carboxypropyl]wyosine(37) in tRNA(Phe) + S-methyl-5'-thioadenosine + H(+). It functions in the pathway tRNA modification; wybutosine-tRNA(Phe) biosynthesis. S-adenosyl-L-methionine-dependent transferase that acts as a component of the wybutosine biosynthesis pathway. Wybutosine is a hyper modified guanosine with a tricyclic base found at the 3'-position adjacent to the anticodon of eukaryotic phenylalanine tRNA. Catalyzes the transfer of the alpha-amino-alpha-carboxypropyl (acp) group from S-adenosyl-L-methionine to the C-7 position of 4-demethylwyosine (imG-14) to produce wybutosine-86. In Mus musculus (Mouse), this protein is tRNA wybutosine-synthesizing protein 2 homolog (Trmt12).